The sequence spans 67 residues: MKVTAVLMVAVLVLTACQLTTANTTDYVRRILARKSTMSKRYCSDSGGWCGLDPELCCNSSCFVLCG.

Positions 1 to 22 (MKVTAVLMVAVLVLTACQLTTA) are cleaved as a signal peptide. Positions 23 to 39 (NTTDYVRRILARKSTMS) are excised as a propeptide. Intrachain disulfides connect C43-C58, C50-C62, and C57-C66. C66 bears the Cysteine amide mark.

Belongs to the conotoxin O1 superfamily. In terms of tissue distribution, expressed by the venom duct.

Its subcellular location is the secreted. The protein is Conotoxin Cl6.8 of Californiconus californicus (California cone).